We begin with the raw amino-acid sequence, 506 residues long: MAEKPKKPQKLKARLPRGLEDRDPAAIRATREMVEKIRAVYELYGFEPVETPAMEYTDALGKFLPDQDRPNEGVFSFQDDDEQWISLRYDLTAPLARYVGERYGTDGLVLPYRSYRVGYVFRNEKPGPGRFRQFMQFDADTVGSATPAADAEICMMAADTMEALGVQRGQYVVKVNNRKVLDGVLEAIGLAGDENAARRLTVLRAIDKLDKFPADEVRKLLGPGRWDGGEEGKGDFTKGANLSAAEADVVLAITKPRDDWKEAIAAAEAYLAKSEVGQAGVSELEEIAKLVMASGYGADRIKIDPSVVRGLEYYTGPVYEVELLLDTKDEKGRPVRFGSVGGGGRYDGLVSRFRGEPVPATGFSIGVSRLQAALTLLGKLDTRPEFGPVVVTVFDRDRVADYQKMVASLRTAGIRAELYLGNPKNMGNQLKYADRRNSPCVIIQGSDEKARGELQIKDLIEGAKAAAAIASNQEWRESRPAQFSCAEADLVAKVREVLARHDVSWG.

Belongs to the class-II aminoacyl-tRNA synthetase family. As to quaternary structure, homodimer.

It localises to the cytoplasm. The catalysed reaction is tRNA(His) + L-histidine + ATP = L-histidyl-tRNA(His) + AMP + diphosphate + H(+). In Bradyrhizobium diazoefficiens (strain JCM 10833 / BCRC 13528 / IAM 13628 / NBRC 14792 / USDA 110), this protein is Histidine--tRNA ligase (hisS).